We begin with the raw amino-acid sequence, 315 residues long: Ester hydrolase C11orf54 homolog (315 aa).

Residues His266, His268, and His278 each coordinate Zn(2+).

In terms of assembly, monomer.

It is found in the nucleus. Its function is as follows. Exhibits ester hydrolase activity on the substrate p-nitrophenyl acetate. The sequence is that of Ester hydrolase C11orf54 homolog from Bos taurus (Bovine).